We begin with the raw amino-acid sequence, 230 residues long: Cytochrome c oxidase subunit 2 (230 aa).

The Mitochondrial intermembrane portion of the chain corresponds to 1-14; the sequence is MAHPSQLGFQDAAS. A helical transmembrane segment spans residues 15–45; sequence PVMEELLHFHDHALMIVLLISTLVLYIIVAM. The Mitochondrial matrix segment spans residues 46–59; that stretch reads VSTKLTNKYILDSQ. Residues 60-87 traverse the membrane as a helical segment; that stretch reads EIEIVWTVLPAVILILIALPSLRILYLM. Residues 88–230 lie on the Mitochondrial intermembrane side of the membrane; sequence DEINDPHLTI…KWSTMMLEDA (143 aa). Residues His161, Cys196, Glu198, Cys200, His204, and Met207 each contribute to the Cu cation site. Mg(2+) is bound at residue Glu198.

The protein belongs to the cytochrome c oxidase subunit 2 family. As to quaternary structure, component of the cytochrome c oxidase (complex IV, CIV), a multisubunit enzyme composed of 14 subunits. The complex is composed of a catalytic core of 3 subunits MT-CO1, MT-CO2 and MT-CO3, encoded in the mitochondrial DNA, and 11 supernumerary subunits COX4I, COX5A, COX5B, COX6A, COX6B, COX6C, COX7A, COX7B, COX7C, COX8 and NDUFA4, which are encoded in the nuclear genome. The complex exists as a monomer or a dimer and forms supercomplexes (SCs) in the inner mitochondrial membrane with NADH-ubiquinone oxidoreductase (complex I, CI) and ubiquinol-cytochrome c oxidoreductase (cytochrome b-c1 complex, complex III, CIII), resulting in different assemblies (supercomplex SCI(1)III(2)IV(1) and megacomplex MCI(2)III(2)IV(2)). Found in a complex with TMEM177, COA6, COX18, COX20, SCO1 and SCO2. Interacts with TMEM177 in a COX20-dependent manner. Interacts with COX20. Interacts with COX16. It depends on Cu cation as a cofactor.

It localises to the mitochondrion inner membrane. The enzyme catalyses 4 Fe(II)-[cytochrome c] + O2 + 8 H(+)(in) = 4 Fe(III)-[cytochrome c] + 2 H2O + 4 H(+)(out). Component of the cytochrome c oxidase, the last enzyme in the mitochondrial electron transport chain which drives oxidative phosphorylation. The respiratory chain contains 3 multisubunit complexes succinate dehydrogenase (complex II, CII), ubiquinol-cytochrome c oxidoreductase (cytochrome b-c1 complex, complex III, CIII) and cytochrome c oxidase (complex IV, CIV), that cooperate to transfer electrons derived from NADH and succinate to molecular oxygen, creating an electrochemical gradient over the inner membrane that drives transmembrane transport and the ATP synthase. Cytochrome c oxidase is the component of the respiratory chain that catalyzes the reduction of oxygen to water. Electrons originating from reduced cytochrome c in the intermembrane space (IMS) are transferred via the dinuclear copper A center (CU(A)) of subunit 2 and heme A of subunit 1 to the active site in subunit 1, a binuclear center (BNC) formed by heme A3 and copper B (CU(B)). The BNC reduces molecular oxygen to 2 water molecules using 4 electrons from cytochrome c in the IMS and 4 protons from the mitochondrial matrix. This is Cytochrome c oxidase subunit 2 (mt-co2) from Salmo salar (Atlantic salmon).